Here is a 161-residue protein sequence, read N- to C-terminus: Small ribosomal subunit protein uS15 (161 aa).

The segment covering 1-13 has biased composition (basic residues); the sequence is MAGKRRKKGRSHS. The tract at residues 1–22 is disordered; the sequence is MAGKRRKKGRSHSTRPATPTVP.

The protein belongs to the universal ribosomal protein uS15 family. In terms of assembly, part of the 30S ribosomal subunit.

This is Small ribosomal subunit protein uS15 from Hyperthermus butylicus (strain DSM 5456 / JCM 9403 / PLM1-5).